A 1485-amino-acid polypeptide reads, in one-letter code: Cystic fibrosis transmembrane conductance regulator (1485 aa).

The Cytoplasmic portion of the chain corresponds to 1–78 (MQRSPVEDAN…SLLRAMARCY (78 aa)). Residues 79 to 99 (IKPFLLFGFLLYIGEATKTVQ) form a helical membrane-spanning segment. The region spanning 83–353 (LLFGFLLYIG…CMVLRMTVTR (271 aa)) is the ABC transmembrane type-1 1 domain. Over 100-123 (PQLLGRIIASFDPAHEPERANGYF) the chain is Extracellular. The chain crosses the membrane as a helical span at residues 124–149 (LAFGLGLLFTARFLLLQPAMFGLHHL). Over 150 to 195 (GMQIRIALFSIIYKKTLKLSSRVLDKISTGQLVSLMSANLGKFDQS) the chain is Cytoplasmic. Residues 196–216 (LGMAHFIWISPLQCILCTGLI) form a helical membrane-spanning segment. Residues 217–224 (WELIDVNS) lie on the Extracellular side of the membrane. A helical membrane pass occupies residues 225-245 (FCALAAISLLGVLQAFLSHKM). The Cytoplasmic segment spans residues 246–299 (GPYKAQKVLLTNKRLALTSEIMENLHSVKAYGWEEIMETLIKNIRQDEVKLTRK). Residues 300 to 320 (IGSLRYFYSSAYFFSAIFVIV) traverse the membrane as a helical segment. Topologically, residues 321-340 (AAVVPHALSRGINLRRIFTT) are extracellular. A helical transmembrane segment spans residues 341–363 (LSYCMVLRMTVTRQLPGSIQMWY). At 364 to 856 (DTMRLIWKIE…YVRYVSNNKS (493 aa)) the chain is on the cytoplasmic side. ATP is bound by residues tryptophan 402, 457–464 (GSMGSGKS), and glutamine 492. The region spanning 424–645 (NGDAGLFFTN…RPDFSSLLLG (222 aa)) is the ABC transporter 1 domain. Residues 653–826 (SAERRCSILT…GILEEENIEA (174 aa)) form a disordered R region region. A helical membrane pass occupies residues 857 to 877 (LLYVLIFILFIAAIEIAGSVA). The ABC transmembrane type-1 2 domain occupies 860-1163 (VLIFILFIAA…CVATSIAVDG (304 aa)). Residues 878–924 (GIFLITDELWREEHQRSEPNMTKHSNASSSGQTYAITVTPTSSYYIL) are Extracellular-facing. 2 N-linked (GlcNAc...) asparagine glycosylation sites follow: asparagine 897 and asparagine 903. Residues 925-946 (YIYVATSESLLAMGFFRGLPFV) traverse the membrane as a discontinuously helical segment. Residues 947–996 (HTTITISKKLHQKMLHAVLSAPMSVLNTMKTGRIMNRFTKDMATIDDMLP) lie on the Cytoplasmic side of the membrane. A helical transmembrane segment spans residues 997 to 1019 (LLMFDFVQLTVVVVGCILVVSIV). The Extracellular segment spans residues 1020–1021 (RP). A helical membrane pass occupies residues 1022–1042 (YIFLAATPLAIIFIVMRKYFL). Residues 1043 to 1103 (RTGQQLKQLE…TATWFLYLST (61 aa)) lie on the Cytoplasmic side of the membrane. Residues 1104–1124 (LRWFLFRADILFVFFFTLAAW) traverse the membrane as a helical segment. At 1125-1138 (IAVGTNQDKPGEIG) the chain is on the extracellular side. The chain crosses the membrane as a helical span at residues 1139-1159 (IIICLAMLILGTFQWCVATSI). Residues 1160–1485 (AVDGMMRSVD…AEDNIQDTRL (326 aa)) lie on the Cytoplasmic side of the membrane. The ABC transporter 2 domain occupies 1211 to 1444 (IEVRNLTVKY…TSHLKQAISP (234 aa)). Residues tyrosine 1220 and 1245–1252 (GRTGSGKS) contribute to the ATP site. The interval 1452 to 1485 (PRRNSSMRTPQSKLSSVTQTLQEEAEDNIQDTRL) is disordered. A compositionally biased stretch (polar residues) spans 1454 to 1473 (RNSSMRTPQSKLSSVTQTLQ). Residues 1474-1485 (EEAEDNIQDTRL) show a composition bias toward acidic residues. Positions 1483-1485 (TRL) match the PDZ-binding motif.

The protein belongs to the ABC transporter superfamily. ABCC family. CFTR transporter (TC 3.A.1.202) subfamily. As to quaternary structure, monomer; does not require oligomerization for channel activity. Interacts with cse1l; this interaction may down-regulate cftr activity. In terms of processing, phosphorylated; this activates the channel. Dephosphorylation strongly decreases ATPase activity. Phosphorylation at PKA sites activates the channel. Phosphorylation at PKC sites enhances the response to phosphorylation by PKA. Detected in gut epithelium (at protein level). Detected in kidney, spleen, intestine and liver. Detected in pancreatic duct epithelium at 5 dpf and throughout adult life.

The protein localises to the apical cell membrane. The protein resides in the early endosome membrane. It is found in the cell membrane. Its subcellular location is the recycling endosome membrane. It localises to the endoplasmic reticulum membrane. The catalysed reaction is ATP + H2O + closed Cl(-) channel = ADP + phosphate + open Cl(-) channel.. It catalyses the reaction chloride(in) = chloride(out). It carries out the reaction hydrogencarbonate(in) = hydrogencarbonate(out). The enzyme catalyses ATP + H2O = ADP + phosphate + H(+). Its function is as follows. Epithelial ion channel that plays an important role in the regulation of epithelial ion and water transport and fluid homeostasis. Mediates the transport of chloride ions across the cell membrane. Possesses an intrinsic ATPase activity and utilizes ATP to gate its channel; the passive flow of anions through the channel is gated by cycles of ATP binding and hydrolysis by the ATP-binding domains. The ion channel is also permeable to HCO(3)(-); selectivity depends on the extracellular chloride concentration. Exerts its function also by modulating the activity of other ion channels and transporters. Contributes to the regulation of the pH and the ion content of the epithelial fluid layer. Required for normal fluid homeostasis in the gut. Required for normal volume expansion and cell shape changes of Kupffer's vesicle during embryonic development and for normal establishment of left-right body patterning. Required for normal resistance to infection by P.aeruginosa strain PA14 and strain SMC573. This is Cystic fibrosis transmembrane conductance regulator from Danio rerio (Zebrafish).